The primary structure comprises 85 residues: U4-theraphotoxin-Hhn1m (85 aa).

Residues 1–22 form the signal peptide; it reads MKVTLIAILTCAAVLVLHTTAA. Residues 23 to 48 constitute a propeptide that is removed on maturation; that stretch reads EELEAESQLVEVGMPDTELAAVDEER. Intrachain disulfides connect Cys52–Cys66, Cys56–Cys77, and Cys71–Cys82.

It belongs to the neurotoxin 12 (Hwtx-2) family. 02 (Hwtx-2) subfamily. In terms of tissue distribution, expressed by the venom gland.

The protein resides in the secreted. Postsynaptic neurotoxin. The sequence is that of U4-theraphotoxin-Hhn1m from Cyriopagopus hainanus (Chinese bird spider).